We begin with the raw amino-acid sequence, 347 residues long: Membrane progestin receptor gamma-B (347 aa).

At 1-52 (MLSLIKLQRVFNVHQVPKAFHEDGIISGYRHPRSSATECVWSLFQLTNETLN) the chain is on the cytoplasmic side. Residues 53-73 (VWTHFLPTWYFLWKLMTVLLM) traverse the membrane as a helical segment. Over 74-81 (EDVWNEAY) the chain is Extracellular. The helical transmembrane segment at 82-102 (TWPLLVFLFSCCVYPLASSCA) threads the bilayer. Residues 103–114 (HTFSSMSTRARH) lie on the Cytoplasmic side of the membrane. The chain crosses the membrane as a helical span at residues 115-135 (ICYFFDYGALSFYSLGSAISY). Over 136-138 (SAY) the chain is Extracellular. A helical transmembrane segment spans residues 139-159 (VFPDAWLSSSFHAYYISVAVF). The Cytoplasmic segment spans residues 160–201 (NTVLSTSLACYSRLGLPLLHYSHDIVERFSERQCPRMSKVLR). A helical membrane pass occupies residues 202 to 222 (ILAFAYPYLFDNIPLFYRLFV). Residues 223–235 (CVGEGCTDNEANS) lie on the Extracellular side of the membrane. A helical membrane pass occupies residues 236-256 (VHVQHTLLAFLTSFLFATHLP). Topologically, residues 257–314 (ERLAPGRFDYIGHSHQLFHVCAIIGTHFQMKAIEMDMGLRRSQLLASAPAISFNNTIG) are cytoplasmic. Residues 315–335 (AALLCVSVSLGIICVYSLPLL) traverse the membrane as a helical segment. Residues 336-347 (YSSNPKNTANKE) lie on the Extracellular side of the membrane.

This sequence belongs to the ADIPOR family.

The protein localises to the membrane. Steroid membrane receptor. Binds progesterone. May be involved in oocyte maturation. The sequence is that of Membrane progestin receptor gamma-B from Danio rerio (Zebrafish).